We begin with the raw amino-acid sequence, 912 residues long: Transferrin-binding protein A (912 aa).

Residues 1-23 (MTKKPYFRLSIISCLLISCYVKA) form the signal peptide. The TonB box signature appears at 50-57 (ETISVTAE). The 126-residue stretch at 63 to 188 (KDNEVTGLGK…LAGSVTFQSK (126 aa)) folds into the TBDR plug domain. The TBDR beta-barrel domain occupies 199–912 (SWGIQTKNAY…NYTLTLEMKF (714 aa)). The TonB C-terminal box signature appears at 895-912 (TRYAASGRNYTLTLEMKF).

This sequence belongs to the TonB-dependent receptor family.

It is found in the cell outer membrane. Its function is as follows. Haemophilus acquires iron by extracting it from serum transferrin (TF) in its human host. Acts as a transferrin receptor and is required for transferrin utilization. The protein is Transferrin-binding protein A of Haemophilus influenzae (strain ATCC 51907 / DSM 11121 / KW20 / Rd).